Consider the following 469-residue polypeptide: Origin recognition complex subunit 6 (469 aa).

Low complexity-rich tracts occupy residues 218–234 and 275–308; these read SSTL…TAPK and ATPT…LSST. Disordered regions lie at residues 218 to 241, 275 to 309, 356 to 423, and 436 to 469; these read SSTL…PIPS, ATPT…SSTN, ESPF…EGDL, and KEQQ…SFFK. 2 stretches are compositionally biased toward basic and acidic residues: residues 380–390 and 409–423; these read SRDELEKESEL and QKEK…EGDL. Over residues 454–469 the composition is skewed to polar residues; sequence TPVNATKQLTLDSFFK.

The protein belongs to the ORC6 family. ORC is composed of six subunits.

It is found in the nucleus. In terms of biological role, component of the origin recognition complex (ORC) that binds origins of replication. DNA-binding is ATP-dependent, however specific DNA sequences that define origins of replication have not been identified so far. ORC is required to assemble the pre-replication complex necessary to initiate DNA replication. The chain is Origin recognition complex subunit 6 (orcF) from Dictyostelium discoideum (Social amoeba).